The primary structure comprises 335 residues: MVMIHIFLTVMVVGGVSLFPETAEAIVMGPSMQKLTWHYYKVYNTCENAENFVRHQVEIFYKNDKSIAPKLLRLLYSDCFVSGCDASVLLEGPNSEKMAPQNRGLGGFVLIDKIKIVLEQRCPGVVSCADILNLATRDAVHLAGAPSYPVFTGRRDGLTSDKQTVDLPSPSISWDQAMSYFKSRGLNVLDMATLLGSHSMGRTHCSYVVDRLYNYNKTGKPSPTMNKYFLSEMAKQCPPRTRKGQTDPLVYLNPDSGSNHSFTSSFYSRILSNKSVLEVDQQLLYNDDTKQISKEFSEGFEDFRKSFALSMSKMGAINVLTKTEGEIRKDCRHIN.

The N-terminal stretch at 1 to 18 (MVMIHIFLTVMVVGGVSL) is a signal peptide. Disulfide bonds link Cys-46–Cys-122, Cys-79–Cys-84, Cys-128–Cys-331, and Cys-205–Cys-237. Arg-73 is an active-site residue. Ca(2+) contacts are provided by Asp-78, Val-81, Gly-83, Asp-85, and Ser-87. Pro-168 contacts substrate. Residue His-198 participates in heme b binding. Residue Ser-199 participates in Ca(2+) binding. Asn-216 carries N-linked (GlcNAc...) asparagine glycosylation. Positions 255 and 258 each coordinate Ca(2+). 2 N-linked (GlcNAc...) asparagine glycosylation sites follow: Asn-259 and Asn-273.

Belongs to the peroxidase family. Classical plant (class III) peroxidase subfamily. The cofactor is heme b. Ca(2+) serves as cofactor.

It localises to the secreted. It catalyses the reaction 2 a phenolic donor + H2O2 = 2 a phenolic radical donor + 2 H2O. In terms of biological role, removal of H(2)O(2), oxidation of toxic reductants, biosynthesis and degradation of lignin, suberization, auxin catabolism, response to environmental stresses such as wounding, pathogen attack and oxidative stress. The enzyme activity has to be proved. This Arabidopsis thaliana (Mouse-ear cress) protein is Probable peroxidase 26 (PER26).